A 31-amino-acid chain; its full sequence is Photosystem II reaction center protein T (31 aa).

A helical transmembrane segment spans residues 3 to 23 (SFAYVLILTFAIATLFFAIAF).

The protein belongs to the PsbT family. In terms of assembly, PSII is composed of 1 copy each of membrane proteins PsbA, PsbB, PsbC, PsbD, PsbE, PsbF, PsbH, PsbI, PsbJ, PsbK, PsbL, PsbM, PsbT, PsbX, PsbY, PsbZ, Psb30/Ycf12, peripheral proteins PsbO, CyanoQ (PsbQ), PsbU, PsbV and a large number of cofactors. It forms dimeric complexes.

The protein localises to the cellular thylakoid membrane. Functionally, found at the monomer-monomer interface of the photosystem II (PS II) dimer, plays a role in assembly and dimerization of PSII. PSII is a light-driven water plastoquinone oxidoreductase, using light energy to abstract electrons from H(2)O, generating a proton gradient subsequently used for ATP formation. The protein is Photosystem II reaction center protein T of Synechococcus sp. (strain CC9902).